A 337-amino-acid polypeptide reads, in one-letter code: B3 domain-containing protein REM16 (337 aa).

2 consecutive DNA-binding regions (TF-B3) follow at residues 22-116 (TLHF…FDGQ) and 223-321 (FLVF…FRGE).

The protein localises to the nucleus. The sequence is that of B3 domain-containing protein REM16 (REM16) from Arabidopsis thaliana (Mouse-ear cress).